The sequence spans 968 residues: A disintegrin and metalloproteinase with thrombospondin motifs 1 (968 aa).

Disordered stretches follow at residues 1–23 and 177–253; these read MQPKVPLGSRKQKPCSDMGDVQR and APAV…RKKR. The N-terminal stretch at 1 to 48 is a signal peptide; that stretch reads MQPKVPLGSRKQKPCSDMGDVQRAARSRGSLSAHMLLLLLASITMLLC. Residues 49-253 constitute a propeptide that is removed on maturation; it reads ARGAHGRPTE…SGPGSIRKKR (205 aa). Residues 204 to 211 carry the Cysteine switch motif; sequence AKCGVMDD. Zn(2+) is bound at residue C206. Over residues 214-229 the composition is skewed to polar residues; sequence LPTSDSRPESQNTRNQ. The Peptidase M12B domain maps to 259–468; the sequence is RYVETMLVAD…GHGECLMDKP (210 aa). Ca(2+)-binding residues include E262, D345, and D352. 4 disulfides stabilise this stretch: C334-C386, C363-C368, C380-C463, and C418-C447. H402 contributes to the Zn(2+) binding site. The active site involves E403. Positions 406 and 412 each coordinate Zn(2+). C463 and D466 together coordinate Ca(2+). The 83-residue stretch at 477–559 folds into the Disintegrin domain; it reads DLPGTLYDAN…TDMKHFATPV (83 aa). 4 disulfide bridges follow: C489-C512, C500-C522, C507-C541, and C535-C546. The N-linked (GlcNAc...) asparagine glycan is linked to N548. One can recognise a TSP type-1 1 domain in the interval 560–615; sequence HGSWGPWGPWGDCSRTCGGGVQYTMRECDNPVPKNGGKYCEGKRVRYRSCNIEDCP. 3 disulfides stabilise this stretch: C572-C609, C576-C614, and C587-C599. N721, N765, and N783 each carry an N-linked (GlcNAc...) asparagine glycan. The spacer stretch occupies residues 726–850; the sequence is KKMSGIVTST…YFMKKKTESF (125 aa). TSP type-1 domains lie at 855-911 and 912-968; these read TFSE…LPCP and HWQV…TQCS. The N-linked (GlcNAc...) asparagine glycan is linked to N946.

Zn(2+) is required as a cofactor. In terms of processing, the precursor is cleaved by a furin endopeptidase. Glycosylated. Can be O-fucosylated by POFUT2 on a serine or a threonine residue found within the consensus sequence C1-X(2)-(S/T)-C2-G of the TSP type-1 repeat domains where C1 and C2 are the first and second cysteine residue of the repeat, respectively. Fucosylated repeats can then be further glycosylated by the addition of a beta-1,3-glucose residue by the glucosyltransferase, B3GALTL. Fucosylation mediates the efficient secretion of ADAMTS family members. Can also be C-glycosylated with one or two mannose molecules on tryptophan residues within the consensus sequence W-X-X-W of the TPRs, and N-glycosylated. These other glycosylations can also facilitate secretion.

The protein localises to the secreted. The protein resides in the extracellular space. It localises to the extracellular matrix. Functionally, metalloprotease which cleaves aggrecan, a cartilage proteoglycan, at the '1691-Glu-|-Leu-1692' site (within the chondroitin sulfate attachment domain), and may be involved in its turnover. Also cleaves COMP. Has angiogenic inhibitor activity. May play a critical role in follicular rupture. The chain is A disintegrin and metalloproteinase with thrombospondin motifs 1 (Adamts1) from Mus musculus (Mouse).